Reading from the N-terminus, the 257-residue chain is Ciliary microtubule associated protein 1B (257 aa).

STPGR repeat units follow at residues 103 to 129, 182 to 207, and 218 to 243; these read PGPG…LSAR, PGPG…MTGR, and PGPG…FGIR.

This sequence belongs to the CIMAP family.

It localises to the cell projection. It is found in the cilium. The protein localises to the flagellum. This chain is Ciliary microtubule associated protein 1B (cimap1b), found in Danio rerio (Zebrafish).